Reading from the N-terminus, the 100-residue chain is Small ribosomal subunit protein uS14c (100 aa).

The protein belongs to the universal ribosomal protein uS14 family. As to quaternary structure, part of the 30S ribosomal subunit.

The protein resides in the plastid. Its subcellular location is the chloroplast. In terms of biological role, binds 16S rRNA, required for the assembly of 30S particles. The chain is Small ribosomal subunit protein uS14c from Trieres chinensis (Marine centric diatom).